Here is a 493-residue protein sequence, read N- to C-terminus: Cytochrome c-552 (493 aa).

Positions 1 to 25 are cleaved as a signal peptide; sequence MEKKLKSWQGWLLFCGAMAVVFVLG. Histidine 116 is a binding site for heme c. Heme is bound by residues cysteine 144, cysteine 147, and lysine 148. Positions 182, 185, 186, 224, 227, and 228 each coordinate heme c. The Ca(2+) site is built by glutamate 230, tyrosine 231, lysine 276, and glutamine 278. Residue tyrosine 231 coordinates substrate. Residue histidine 279 participates in substrate binding. Heme c-binding residues include histidine 290, cysteine 297, cysteine 300, histidine 301, histidine 315, cysteine 328, cysteine 331, histidine 332, and histidine 407.

The protein belongs to the cytochrome c-552 family. Requires Ca(2+) as cofactor. Heme c serves as cofactor.

The protein localises to the periplasm. It carries out the reaction 6 Fe(III)-[cytochrome c] + NH4(+) + 2 H2O = 6 Fe(II)-[cytochrome c] + nitrite + 8 H(+). Its pathway is nitrogen metabolism; nitrate reduction (assimilation). In terms of biological role, catalyzes the reduction of nitrite to ammonia, consuming six electrons in the process. In Bacteroides fragilis (strain YCH46), this protein is Cytochrome c-552.